Here is a 515-residue protein sequence, read N- to C-terminus: Sodium/hydrogen exchanger 9B1 (515 aa).

A compositionally biased stretch (basic and acidic residues) spans 1–10 (MHTTESKNEH). The interval 1–32 (MHTTESKNEHLEDENFQTSTTPQSLIDPNNTA) is disordered. Residues 16-32 (FQTSTTPQSLIDPNNTA) show a composition bias toward polar residues. The next 13 helical transmembrane spans lie at 66–86 (VIIT…SILG), 95–115 (LFGL…LQLI), 116–136 (RIPL…GFTI), 152–172 (WSSI…GLGL), 187–207 (LAVG…HFIM), 215–235 (FLLG…YMMV), 260–280 (ILAI…GGIL), 284–304 (IASI…GFFV), 337–357 (IGLH…AGTK), 368–388 (IITT…GAEV), 407–427 (LALC…GFSF), 431–451 (IFIA…GPLA), and 472–492 (VAFL…GILG).

The protein belongs to the monovalent cation:proton antiporter 1 (CPA1) transporter (TC 2.A.36) family. As to expression, expressed only in the testis.

The protein localises to the cell projection. It is found in the cilium. Its subcellular location is the flagellum membrane. Sperm-specific Na(+)/H(+) exchanger involved in intracellular pH regulation of spermatozoa. Involved in sperm motility and fertility. The sequence is that of Sodium/hydrogen exchanger 9B1 from Homo sapiens (Human).